The sequence spans 279 residues: uncharacterized protein (279 aa).

2 disordered regions span residues 50-109 (YTYN…YNKN) and 249-279 (SQSQPSSFSSSSSSSSIQLSPSPSSSSSPKL). The segment covering 68 to 109 (NNNSNYNNNNNNNNNNNNNNNNNNNNNNNKNNNNNNYNYNKN) has biased composition (low complexity).

This is an uncharacterized protein from Dictyostelium discoideum (Social amoeba).